A 335-amino-acid chain; its full sequence is Antigen-presenting glycoprotein CD1d (335 aa).

Positions 1–19 (MGCLLFLLLWALLQAWGSA) are cleaved as a signal peptide. Over 20 to 301 (EVPQRLFPLR…ILYWGGSYTS (282 aa)) the chain is Extracellular. Residues asparagine 38 and asparagine 60 are each glycosylated (N-linked (GlcNAc...) asparagine). Aspartate 98 is an a D-galactosylceramide binding site. A glycan (N-linked (GlcNAc...) asparagine) is linked at asparagine 126. Residues aspartate 169, 169 to 172 (DKWT), and threonine 172 contribute to the a D-galactosylceramide site. Asparagine 181 carries an N-linked (GlcNAc...) asparagine glycan. An Ig-like domain is found at 185 to 292 (PQFVSGLLES…HSSLEGQDII (108 aa)). The chain crosses the membrane as a helical span at residues 302-322 (VGLIVLAVLACLLFLLIVGFT). Residues 323-335 (SRFKRQTSYQGVL) lie on the Cytoplasmic side of the membrane. The Internalization signal signature appears at 331–334 (YQGV).

Heterodimer with B2M (beta-2-microglobulin). Interacts with MHC II.

It is found in the cell membrane. It localises to the basolateral cell membrane. The protein resides in the endosome membrane. The protein localises to the lysosome membrane. Its subcellular location is the endoplasmic reticulum membrane. Its function is as follows. Antigen-presenting protein that binds self and non-self glycolipids and presents them to T-cell receptors on natural killer T-cells. The polypeptide is Antigen-presenting glycoprotein CD1d (CD1D) (Pan troglodytes (Chimpanzee)).